A 272-amino-acid polypeptide reads, in one-letter code: Pyrroline-5-carboxylate reductase (272 aa).

Belongs to the pyrroline-5-carboxylate reductase family.

The protein resides in the cytoplasm. It carries out the reaction L-proline + NADP(+) = (S)-1-pyrroline-5-carboxylate + NADPH + 2 H(+). The enzyme catalyses L-proline + NAD(+) = (S)-1-pyrroline-5-carboxylate + NADH + 2 H(+). The protein operates within amino-acid biosynthesis; L-proline biosynthesis; L-proline from L-glutamate 5-semialdehyde: step 1/1. Its function is as follows. Catalyzes the reduction of 1-pyrroline-5-carboxylate (PCA) to L-proline. This Vibrio alginolyticus protein is Pyrroline-5-carboxylate reductase.